A 224-amino-acid chain; its full sequence is Peptidyl-tRNA hydrolase (224 aa).

Residue Tyr27 participates in tRNA binding. The active-site Proton acceptor is the His32. TRNA contacts are provided by Tyr78, Asn80, and Asn126. A compositionally biased stretch (low complexity) spans 203–215 (LSGPSSDLDGSNP). The disordered stretch occupies residues 203–224 (LSGPSSDLDGSNPAPGHGEASS).

It belongs to the PTH family. As to quaternary structure, monomer.

It localises to the cytoplasm. It catalyses the reaction an N-acyl-L-alpha-aminoacyl-tRNA + H2O = an N-acyl-L-amino acid + a tRNA + H(+). Its function is as follows. Hydrolyzes ribosome-free peptidyl-tRNAs (with 1 or more amino acids incorporated), which drop off the ribosome during protein synthesis, or as a result of ribosome stalling. Catalyzes the release of premature peptidyl moieties from peptidyl-tRNA molecules trapped in stalled 50S ribosomal subunits, and thus maintains levels of free tRNAs and 50S ribosomes. The sequence is that of Peptidyl-tRNA hydrolase from Synechococcus sp. (strain JA-2-3B'a(2-13)) (Cyanobacteria bacterium Yellowstone B-Prime).